The chain runs to 298 residues: MTDAAVSFAKDFLAGGVAAAISKTAVAPIERVKLLLQVQHASKQITADKQYKGIMDCVVRIPKEQGVLSFWRGNLANVIRYFPTQALNFAFKDKYKQIFLGGVDKRTQFWRYFAGNLASGGAAGATSLCFVYPLDFARTRLAADVGKAGDAREFKGLGDCLVKITKSDGIRGLYQGFNVSVQGIIIYRAAYFGIYDTAKGMLPDPKNTHIFISWMIAQSVTAVAGLTSYPFDTVRRRMMMQSGRKGSDIMYTGTIDCWKKIARDEGSKAFFKGAWSNVLRGMGGAFVLVLYDEIKKYT.

Met1 is subject to N-acetylmethionine. Topologically, residues 1-7 are mitochondrial intermembrane; the sequence is MTDAAVS. Thr2 is modified (N-acetylthreonine; in ADP/ATP translocase 2, N-terminally processed). The stretch at 6–98 is one Solcar 1 repeat; the sequence is VSFAKDFLAG…FAFKDKYKQI (93 aa). Residue Ser7 is modified to Phosphoserine. A helical transmembrane segment spans residues 8-37; the sequence is FAKDFLAGGVAAAISKTAVAPIERVKLLLQ. Residue Lys23 is modified to N6-malonyllysine. Residues 38-74 lie on the Mitochondrial matrix side of the membrane; sequence VQHASKQITADKQYKGIMDCVVRIPKEQGVLSFWRGN. The residue at position 43 (Lys43) is an N6-succinyllysine. Lys52 is subject to N6,N6,N6-trimethyllysine; alternate. The residue at position 52 (Lys52) is an N6,N6-dimethyllysine; alternate. The residue at position 52 (Lys52) is an N6-methyllysine; alternate. The helical transmembrane segment at 75 to 99 threads the bilayer; it reads LANVIRYFPTQALNFAFKDKYKQIF. Arg80 and Lys92 together coordinate ADP. N6-malonyllysine is present on residues Lys92 and Lys96. Residues 100 to 109 are Mitochondrial intermembrane-facing; it reads LGGVDKRTQF. Lys105 bears the N6-acetyllysine; alternate mark. Lys105 carries the N6-succinyllysine; alternate modification. A helical membrane pass occupies residues 110 to 130; the sequence is WRYFAGNLASGGAAGATSLCF. Solcar repeat units follow at residues 111–201 and 212–297; these read RYFA…AKGM and ISWM…IKKY. The Mitochondrial matrix portion of the chain corresponds to 131–178; that stretch reads VYPLDFARTRLAADVGKAGDAREFKGLGDCLVKITKSDGIRGLYQGFN. Lys147 carries the N6-methyllysine; alternate modification. N6-acetyllysine; alternate occurs at positions 147 and 155. Residues Lys147 and Lys155 each carry the N6-succinyllysine; alternate modification. An N6-malonyllysine; alternate modification is found at Lys147. Lys163 and Lys166 each carry N6-acetyllysine. The helical transmembrane segment at 179 to 199 threads the bilayer; that stretch reads VSVQGIIIYRAAYFGIYDTAK. The Mitochondrial intermembrane portion of the chain corresponds to 200-210; sequence GMLPDPKNTHI. A helical membrane pass occupies residues 211 to 231; it reads FISWMIAQSVTAVAGLTSYPF. The Mitochondrial matrix segment spans residues 232-273; it reads DTVRRRMMMQSGRKGSDIMYTGTIDCWKKIARDEGSKAFFKG. Residue Arg235 coordinates ADP. The segment at 235 to 240 is important for transport activity; the sequence is RRRMMM. The short motif at 235 to 240 is the Nucleotide carrier signature motif element; that stretch reads RRRMMM. Lys268 carries the N6-acetyllysine; alternate modification. At Lys268 the chain carries N6-succinyllysine; alternate. Residues 274–291 traverse the membrane as a helical segment; that stretch reads AWSNVLRGMGGAFVLVLY. Over 292 to 298 the chain is Mitochondrial intermembrane; it reads DEIKKYT.

The protein belongs to the mitochondrial carrier (TC 2.A.29) family. As to quaternary structure, monomer. Component of the MMXD complex, which includes CIAO1, ERCC2, CIAO2B, MMS19 and SLC25A5/ANT2. Interacts with AK4. Interacts with TIMM44; leading to inhibit the presequence translocase TIMM23, thereby promoting stabilization of PINK1. Post-translationally, trimethylated by ANTKMT at Lys-52.

The protein resides in the mitochondrion inner membrane. The protein localises to the membrane. The enzyme catalyses ADP(in) + ATP(out) = ADP(out) + ATP(in). It catalyses the reaction H(+)(in) = H(+)(out). With respect to regulation, the matrix-open state (m-state) is inhibited by the membrane-permeable bongkrekic acid (BKA). The cytoplasmic-open state (c-state) is inhibited by the membrane-impermeable toxic inhibitor carboxyatractyloside (CATR). Proton transporter activity is inhibited by ADP:ATP antiporter activity. Its function is as follows. ADP:ATP antiporter that mediates import of ADP into the mitochondrial matrix for ATP synthesis, and export of ATP out to fuel the cell. Cycles between the cytoplasmic-open state (c-state) and the matrix-open state (m-state): operates by the alternating access mechanism with a single substrate-binding site intermittently exposed to either the cytosolic (c-state) or matrix (m-state) side of the inner mitochondrial membrane. In addition to its ADP:ATP antiporter activity, also involved in mitochondrial uncoupling and mitochondrial permeability transition pore (mPTP) activity. Plays a role in mitochondrial uncoupling by acting as a proton transporter: proton transport uncouples the proton flows via the electron transport chain and ATP synthase to reduce the efficiency of ATP production and cause mitochondrial thermogenesis. Proton transporter activity is inhibited by ADP:ATP antiporter activity, suggesting that SLC25A5/ANT2 acts as a master regulator of mitochondrial energy output by maintaining a delicate balance between ATP production (ADP:ATP antiporter activity) and thermogenesis (proton transporter activity). Proton transporter activity requires free fatty acids as cofactor, but does not transport it. Probably mediates mitochondrial uncoupling in tissues that do not express UCP1. Also plays a key role in mPTP opening, a non-specific pore that enables free passage of the mitochondrial membranes to solutes of up to 1.5 kDa, and which contributes to cell death. It is however unclear if SLC25A5/ANT2 constitutes a pore-forming component of mPTP or regulates it. Acts as a regulator of mitophagy independently of ADP:ATP antiporter activity: promotes mitophagy via interaction with TIMM44, leading to inhibit the presequence translocase TIMM23, thereby promoting stabilization of PINK1. As part of the mitotic spindle-associated MMXD complex it may play a role in chromosome segregation. The protein is ADP/ATP translocase 2 of Tachyglossus aculeatus aculeatus (Southeast Australian short-beaked echidna).